Here is a 102-residue protein sequence, read N- to C-terminus: NADH-quinone oxidoreductase subunit K (102 aa).

3 helical membrane passes run 6–26 (MEHG…GLLI), 30–50 (LLYI…AFVV), and 65–85 (ILVI…LLLL).

The protein belongs to the complex I subunit 4L family. NDH-1 is composed of 13 different subunits. Subunits NuoA, H, J, K, L, M, N constitute the membrane sector of the complex.

It localises to the cell inner membrane. The enzyme catalyses a quinone + NADH + 5 H(+)(in) = a quinol + NAD(+) + 4 H(+)(out). NDH-1 shuttles electrons from NADH, via FMN and iron-sulfur (Fe-S) centers, to quinones in the respiratory chain. The immediate electron acceptor for the enzyme in this species is believed to be ubiquinone. Couples the redox reaction to proton translocation (for every two electrons transferred, four hydrogen ions are translocated across the cytoplasmic membrane), and thus conserves the redox energy in a proton gradient. The polypeptide is NADH-quinone oxidoreductase subunit K (Shewanella oneidensis (strain ATCC 700550 / JCM 31522 / CIP 106686 / LMG 19005 / NCIMB 14063 / MR-1)).